The following is a 581-amino-acid chain: Pyridine nucleotide-disulfide oxidoreductase domain-containing protein 2 (581 aa).

38-71 provides a ligand contact to FAD; the sequence is VVIGAGHNGLVVAAYLQRLGVNTAVFERRHVIGG.

This sequence belongs to the carotenoid/retinoid oxidoreductase family. As to quaternary structure, interacts with COX5B; this interaction may contribute to localize PYROXD2 to the inner face of the inner mitochondrial membrane.

Its subcellular location is the mitochondrion matrix. Its function is as follows. Probable oxidoreductase that may play a role as regulator of mitochondrial function. In Pongo abelii (Sumatran orangutan), this protein is Pyridine nucleotide-disulfide oxidoreductase domain-containing protein 2.